A 109-amino-acid chain; its full sequence is Flagellar hook-basal body complex protein FliE (109 aa).

It belongs to the FliE family.

The protein resides in the bacterial flagellum basal body. The sequence is that of Flagellar hook-basal body complex protein FliE from Stutzerimonas stutzeri (strain A1501) (Pseudomonas stutzeri).